A 294-amino-acid chain; its full sequence is Mitochondrial substrate carrier family protein ucpB (294 aa).

The Mitochondrial intermembrane portion of the chain corresponds to 1–10; the sequence is MTSQESIGIK. 3 Solcar repeats span residues 9–93, 101–187, and 197–288; these read IKFL…IKNY, TNLL…IKHM, and DGLQ…LRKV. A helical membrane pass occupies residues 11 to 31; sequence FLFGGLSCMGAAVVSNPVDVL. Topologically, residues 32–67 are mitochondrial matrix; sequence KTRFQIHGEGIDSKSLGLVNGTIKIIKNEGISAMYK. A helical transmembrane segment spans residues 68–88; it reads GLTPSLLREATYSTLRMGGYD. The Mitochondrial intermembrane segment spans residues 89–106; sequence VIKNYFIDSNGKTNLLSK. The helical transmembrane segment at 107 to 127 threads the bilayer; it reads VTSGALSGALGACITSPTDLI. Over 128-161 the chain is Mitochondrial matrix; the sequence is KVRMQASSKGVKYDSISSAFKEIIAKEGIKGLWK. A helical membrane pass occupies residues 162 to 182; that stretch reads GVGPTTQRAALLTASQIPSYD. Topologically, residues 183 to 192 are mitochondrial intermembrane; the sequence is HIKHMILDHG. The chain crosses the membrane as a helical span at residues 193–213; that stretch reads IIQVDGLQVHIVSSIFAGLIA. Residues 214-267 are Mitochondrial matrix-facing; that stretch reads SITTSPVDLVKTRIMNQPFDSNGVGLIYKSSYDCFKKTFQSEGISGLYKGFLPN. The helical transmembrane segment at 268-285 threads the bilayer; it reads WFRIGPHTIVTFILYEYL. Residues 286-294 lie on the Mitochondrial intermembrane side of the membrane; sequence RKVSGIKPI.

Belongs to the mitochondrial carrier (TC 2.A.29) family.

It localises to the mitochondrion inner membrane. In terms of biological role, mitochondrial solute carriers shuttle metabolites, nucleotides, and cofactors through the mitochondrial inner membrane. The protein is Mitochondrial substrate carrier family protein ucpB (ucpB) of Dictyostelium discoideum (Social amoeba).